Consider the following 270-residue polypeptide: Phosphonoacetaldehyde hydrolase (270 aa).

Aspartate 11 functions as the Nucleophile in the catalytic mechanism. 2 residues coordinate Mg(2+): aspartate 11 and alanine 13. Lysine 53 functions as the Schiff-base intermediate with substrate in the catalytic mechanism. Residue aspartate 187 coordinates Mg(2+).

This sequence belongs to the HAD-like hydrolase superfamily. PhnX family. As to quaternary structure, homodimer. Mg(2+) is required as a cofactor.

The catalysed reaction is phosphonoacetaldehyde + H2O = acetaldehyde + phosphate + H(+). In terms of biological role, involved in phosphonate degradation. This chain is Phosphonoacetaldehyde hydrolase, found in Salmonella enteritidis PT4 (strain P125109).